Consider the following 197-residue polypeptide: Holliday junction branch migration complex subunit RuvA (197 aa).

Residues 1–64 (MYDYIKGIYK…DDSINLYGFF (64 aa)) form a domain I region. The segment at 65–143 (TEEERDMFNL…NDDIISDIDD (79 aa)) is domain II. A flexible linker region spans residues 144–154 (LDSISNFQLHS). Positions 154–197 (SAEALEALMSLGYSQKESEKALKNVDKENSLEDIIKACLKYLMG) are domain III.

This sequence belongs to the RuvA family. As to quaternary structure, homotetramer. Forms an RuvA(8)-RuvB(12)-Holliday junction (HJ) complex. HJ DNA is sandwiched between 2 RuvA tetramers; dsDNA enters through RuvA and exits via RuvB. An RuvB hexamer assembles on each DNA strand where it exits the tetramer. Each RuvB hexamer is contacted by two RuvA subunits (via domain III) on 2 adjacent RuvB subunits; this complex drives branch migration. In the full resolvosome a probable DNA-RuvA(4)-RuvB(12)-RuvC(2) complex forms which resolves the HJ.

Its subcellular location is the cytoplasm. The RuvA-RuvB-RuvC complex processes Holliday junction (HJ) DNA during genetic recombination and DNA repair, while the RuvA-RuvB complex plays an important role in the rescue of blocked DNA replication forks via replication fork reversal (RFR). RuvA specifically binds to HJ cruciform DNA, conferring on it an open structure. The RuvB hexamer acts as an ATP-dependent pump, pulling dsDNA into and through the RuvAB complex. HJ branch migration allows RuvC to scan DNA until it finds its consensus sequence, where it cleaves and resolves the cruciform DNA. This chain is Holliday junction branch migration complex subunit RuvA, found in Clostridium tetani (strain Massachusetts / E88).